We begin with the raw amino-acid sequence, 320 residues long: 1-aminocyclopropane-1-carboxylate oxidase 3 (320 aa).

One can recognise a Fe2OG dioxygenase domain in the interval 153-253 (PNFGTKVSNY…RMSLASFYNP (101 aa)). Fe cation-binding residues include H177, D179, and H234.

The protein belongs to the iron/ascorbate-dependent oxidoreductase family. Requires Fe cation as cofactor.

The enzyme catalyses 1-aminocyclopropane-1-carboxylate + L-ascorbate + O2 = ethene + L-dehydroascorbate + hydrogen cyanide + CO2 + 2 H2O. It participates in alkene biosynthesis; ethylene biosynthesis via S-adenosyl-L-methionine; ethylene from S-adenosyl-L-methionine: step 2/2. This chain is 1-aminocyclopropane-1-carboxylate oxidase 3 (ACO3), found in Petunia hybrida (Petunia).